Consider the following 83-residue polypeptide: Type 3 secretion system needle filament protein (83 aa).

It belongs to the SctF family. In terms of assembly, the core secretion machinery of the T3SS is composed of approximately 20 different proteins, including cytoplasmic components, a base, an export apparatus and a needle. This subunit polymerizes and forms the helical needle filament. Interacts with the needle tip protein IpaD/SctA. Interacts with the export apparatus components SpaP/SctR, SpaQ/SctS and SpaR/SctT.

It localises to the secreted. Its subcellular location is the cell surface. In terms of biological role, component of the type III secretion system (T3SS), also called injectisome, which is used to inject bacterial effector proteins into eukaryotic host cells. MxiH/SctF forms the external needle filament that protrudes from the bacterial surface. During infection, can induce innate immune responses. The needle proteins interact with host TLR2 or TLR4, and induce signaling by NF-kappa-B and/or AP-1. This activation is MyD88 dependent and results in increased expression of cytokines, including TNF-alpha, IL-6 and IL-8. The polypeptide is Type 3 secretion system needle filament protein (Shigella flexneri).